The chain runs to 1940 residues: Protein ORF1940 (1940 aa).

TPR repeat units lie at residues 119–153 (IKAC…ALQY), 155–186 (FQSL…LQQI), 480–513 (RLPD…GLHG), and 617–652 (GKSM…SPTS). Disordered stretches follow at residues 1160-1239 (PSKV…PGAV) and 1519-1571 (KGPS…TVTS). A compositionally biased stretch (low complexity) spans 1164-1185 (QNTTQPSATQNTTTQPTAQNTS). Polar residues predominate over residues 1186–1200 (LPGATQNTTLPTPSK). Composition is skewed to low complexity over residues 1201-1235 (VQNT…NTSL), 1521-1539 (PSTT…MTPP), and 1561-1571 (TPGSGSQTVTS). One copy of the TPR 5 repeat lies at 1691–1724 (KDLNKSVGTSVVEEAKYNSTLQTYLAGLGIKDLN). The disordered stretch occupies residues 1862–1940 (TTTHHITPPP…AEQAEQVLLI (79 aa)). Pro residues predominate over residues 1868–1883 (TPPPPPPPPPPPPPPK). Residues 1884–1894 (TQTITTTTQIT) show a composition bias toward low complexity. Residues 1895-1912 (PPSPPPTPPPPPPPPKSP) are compositionally biased toward pro residues.

The protein is Protein ORF1940 of Acidianus convivator (ATV).